The sequence spans 944 residues: Neutral alpha-glucosidase AB (944 aa).

An N-terminal signal peptide occupies residues 1–32 (MAAVAAVAARRRRSWTGLVLACLGVCLGLTLA). A disulfide bridge links Cys41 with Cys47. Ser52 bears the Phosphoserine mark. N-linked (GlcNAc...) asparagine glycosylation occurs at Asn97. The interval 181-225 (QRAPRVSQGSKDPAEGDGAQPEEAPGDGDKPEEIQGKAEKDEPGA) is disordered. Positions 207–225 (DGDKPEEIQGKAEKDEPGA) are enriched in basic and acidic residues. Asp283 and Asp429 together coordinate substrate. The Nucleophile role is filled by Asp542. Arg602 contacts substrate. Catalysis depends on Asp618, which acts as the Proton donor. Cys633 and Cys644 are oxidised to a cystine. Residue His676 coordinates substrate.

This sequence belongs to the glycosyl hydrolase 31 family. In terms of assembly, heterodimer of a catalytic alpha subunit (GANAB) and a beta subunit (PRKCSH). Binds glycosylated PTPRC. In terms of processing, contains sialylated polysaccharide chains.

It localises to the endoplasmic reticulum. The protein resides in the golgi apparatus. It is found in the melanosome. It carries out the reaction N(4)-(alpha-D-Glc-(1-&gt;3)-alpha-D-Man-(1-&gt;2)-alpha-D-Man-(1-&gt;2)-alpha-D-Man-(1-&gt;3)-[alpha-D-Man-(1-&gt;2)-alpha-D-Man-(1-&gt;3)-[alpha-D-Man-(1-&gt;2)-alpha-D-Man-(1-&gt;6)]-alpha-D-Man-(1-&gt;6)]-beta-D-Man-(1-&gt;4)-beta-D-GlcNAc-(1-&gt;4)-beta-D-GlcNAc)-L-asparaginyl-[protein] + H2O = N(4)-(alpha-D-Man-(1-&gt;2)-alpha-D-Man-(1-&gt;2)-alpha-D-Man-(1-&gt;3)-[alpha-D-Man-(1-&gt;2)-alpha-D-Man-(1-&gt;3)-[alpha-D-Man-(1-&gt;2)-alpha-D-Man-(1-&gt;6)]-alpha-D-Man-(1-&gt;6)]-beta-D-Man-(1-&gt;4)-beta-D-GlcNAc-(1-&gt;4)-beta-D-GlcNAc)-L-asparaginyl-[protein] (N-glucan mannose isomer 9A1,2,3B1,2,3) + beta-D-glucose. The enzyme catalyses N(4)-(alpha-D-Glc-(1-&gt;3)-alpha-D-Glc-(1-&gt;3)-alpha-D-Man-(1-&gt;2)-alpha-D-Man-(1-&gt;2)-alpha-D-Man-(1-&gt;3)-[alpha-D-Man-(1-&gt;2)-alpha-D-Man-(1-&gt;3)-[alpha-D-Man-(1-&gt;2)-alpha-D-Man-(1-&gt;6)]-alpha-D-Man-(1-&gt;6)]-beta-D-Man-(1-&gt;4)-beta-D-GlcNAc-(1-&gt;4)-beta-D-GlcNAc)-L-asparaginyl-[protein] + H2O = N(4)-(alpha-D-Glc-(1-&gt;3)-alpha-D-Man-(1-&gt;2)-alpha-D-Man-(1-&gt;2)-alpha-D-Man-(1-&gt;3)-[alpha-D-Man-(1-&gt;2)-alpha-D-Man-(1-&gt;3)-[alpha-D-Man-(1-&gt;2)-alpha-D-Man-(1-&gt;6)]-alpha-D-Man-(1-&gt;6)]-beta-D-Man-(1-&gt;4)-beta-D-GlcNAc-(1-&gt;4)-beta-D-GlcNAc)-L-asparaginyl-[protein] + beta-D-glucose. It functions in the pathway glycan metabolism; N-glycan metabolism. Catalytic subunit of glucosidase II that cleaves sequentially the 2 innermost alpha-1,3-linked glucose residues from the Glc(2)Man(9)GlcNAc(2) oligosaccharide precursor of immature glycoproteins. Required for PKD1/Polycystin-1 and PKD2/Polycystin-2 maturation and localization to the cell surface and cilia. The polypeptide is Neutral alpha-glucosidase AB (GANAB) (Sus scrofa (Pig)).